The primary structure comprises 95 residues: UPF0235 protein Ssed_1229 (95 aa).

Belongs to the UPF0235 family.

The protein is UPF0235 protein Ssed_1229 of Shewanella sediminis (strain HAW-EB3).